Reading from the N-terminus, the 753-residue chain is 5-methyltetrahydropteroyltriglutamate--homocysteine methyltransferase (753 aa).

Residues 17–20 and lysine 117 contribute to the 5-methyltetrahydropteroyltri-L-glutamate site; that span reads RELK. L-homocysteine contacts are provided by residues 431-433 and glutamate 484; that span reads IGS. Residues 431 to 433 and glutamate 484 contribute to the L-methionine site; that span reads IGS. 5-methyltetrahydropteroyltri-L-glutamate contacts are provided by residues 515-516 and tryptophan 561; that span reads RC. Residue aspartate 599 participates in L-homocysteine binding. Aspartate 599 provides a ligand contact to L-methionine. Glutamate 605 serves as a coordination point for 5-methyltetrahydropteroyltri-L-glutamate. The Zn(2+) site is built by histidine 641, cysteine 643, and glutamate 665. Histidine 694 serves as the catalytic Proton donor. Cysteine 726 serves as a coordination point for Zn(2+).

It belongs to the vitamin-B12 independent methionine synthase family. Zn(2+) is required as a cofactor.

The catalysed reaction is 5-methyltetrahydropteroyltri-L-glutamate + L-homocysteine = tetrahydropteroyltri-L-glutamate + L-methionine. It participates in amino-acid biosynthesis; L-methionine biosynthesis via de novo pathway; L-methionine from L-homocysteine (MetE route): step 1/1. In terms of biological role, catalyzes the transfer of a methyl group from 5-methyltetrahydrofolate to homocysteine resulting in methionine formation. The chain is 5-methyltetrahydropteroyltriglutamate--homocysteine methyltransferase from Shigella flexneri.